A 132-amino-acid chain; its full sequence is Gonadotropin subunit beta-1 (132 aa).

Positions 1 to 17 are cleaved as a signal peptide; the sequence is MMRGVTMVLLLPMLVWA. 5 disulfide bridges follow: Cys-25/Cys-73, Cys-39/Cys-88, Cys-50/Cys-104, Cys-54/Cys-106, and Cys-109/Cys-116. N-linked (GlcNAc...) asparagine glycans are attached at residues Asn-29 and Asn-46.

This sequence belongs to the glycoprotein hormones subunit beta family. Heterodimer of an alpha and a beta chain.

The protein localises to the secreted. Involved in gametogenesis and steroidogenesis. The polypeptide is Gonadotropin subunit beta-1 (cgba) (Ictalurus punctatus (Channel catfish)).